The following is a 287-amino-acid chain: Putative inactive carboxylesterase 4 (287 aa).

Residues 1-18 (MWLPALVLATLAASAAWA) form the signal peptide. A glycan (N-linked (GlcNAc...) asparagine) is linked at N80.

The protein belongs to the type-B carboxylesterase/lipase family. In terms of tissue distribution, expressed in placenta.

Its subcellular location is the secreted. Its function is as follows. Has no esterase activity. The chain is Putative inactive carboxylesterase 4 (CES1P1) from Homo sapiens (Human).